We begin with the raw amino-acid sequence, 106 residues long: Biogenesis of lysosome-related organelles complex 1 subunit 6 (106 aa).

A disordered region spans residues 78 to 106 (KKTSQLELSDTNIEDGSTTSTPTTTNKSQ). Residues 82–93 (QLELSDTNIEDG) are compositionally biased toward polar residues. Low complexity predominate over residues 94 to 106 (STTSTPTTTNKSQ).

It belongs to the BLOC1S6 family. As to quaternary structure, homodimer (isoform 1). Component of the biogenesis of lysosome-related organelles complex-1 (BLOC-1) composed at least of blos-1, blos-2, blos-4, dsbn-1, glo-2, mutd-1 and snpn-1. Isoform 1 interacts with blos-1 and blos-4.

The protein localises to the cytoplasm. The protein resides in the endosome. Component of the biogenesis of lysosome-related organelles complex-1 (BLOC-1) involved in gut granule biogenesis. This chain is Biogenesis of lysosome-related organelles complex 1 subunit 6 (glo-2), found in Caenorhabditis elegans.